Consider the following 96-residue polypeptide: Large ribosomal subunit protein bL21 (96 aa).

This sequence belongs to the bacterial ribosomal protein bL21 family. In terms of assembly, part of the 50S ribosomal subunit. Contacts protein L20.

In terms of biological role, this protein binds to 23S rRNA in the presence of protein L20. This is Large ribosomal subunit protein bL21 from Prosthecochloris aestuarii (strain DSM 271 / SK 413).